A 160-amino-acid polypeptide reads, in one-letter code: Phosphoribosyl-ATP pyrophosphatase (160 aa).

It belongs to the PRA-PH family.

The protein resides in the cytoplasm. The catalysed reaction is 1-(5-phospho-beta-D-ribosyl)-ATP + H2O = 1-(5-phospho-beta-D-ribosyl)-5'-AMP + diphosphate + H(+). The protein operates within amino-acid biosynthesis; L-histidine biosynthesis; L-histidine from 5-phospho-alpha-D-ribose 1-diphosphate: step 2/9. In Granulibacter bethesdensis (strain ATCC BAA-1260 / CGDNIH1), this protein is Phosphoribosyl-ATP pyrophosphatase.